A 380-amino-acid polypeptide reads, in one-letter code: tRNA-specific 2-thiouridylase MnmA (380 aa).

ATP contacts are provided by residues 6-13 (ALSGGVDS) and M32. Residue C101 is the Nucleophile of the active site. Cysteines 101 and 199 form a disulfide. ATP is bound at residue G125. The interaction with tRNA stretch occupies residues 148–150 (KDQ). Catalysis depends on C199, which acts as the Cysteine persulfide intermediate.

Belongs to the MnmA/TRMU family.

The protein resides in the cytoplasm. The catalysed reaction is S-sulfanyl-L-cysteinyl-[protein] + uridine(34) in tRNA + AH2 + ATP = 2-thiouridine(34) in tRNA + L-cysteinyl-[protein] + A + AMP + diphosphate + H(+). Catalyzes the 2-thiolation of uridine at the wobble position (U34) of tRNA, leading to the formation of s(2)U34. This Beutenbergia cavernae (strain ATCC BAA-8 / DSM 12333 / CCUG 43141 / JCM 11478 / NBRC 16432 / NCIMB 13614 / HKI 0122) protein is tRNA-specific 2-thiouridylase MnmA.